A 260-amino-acid chain; its full sequence is HTH-type transcriptional repressor NanR (260 aa).

Positions 1–20 (MNPFDSQSEDASDAIGRSLG) are disordered. Residues 27–95 (KKLSEMVEEE…NGERARVSRP (69 aa)) enclose the HTH gntR-type domain. The segment at residues 55-74 (ERELMAFFNVGRPSVREALA) is a DNA-binding region (H-T-H motif).

Belongs to the NanR family.

Transcriptional repressor that controls expression of the genes required for the catabolism of sialic acids. In Cronobacter sakazakii (strain ATCC BAA-894) (Enterobacter sakazakii), this protein is HTH-type transcriptional repressor NanR.